The sequence spans 439 residues: MNMYHDADRALLDPMETASVDALRQHQLERLRWSLKHAYDNVPLYRQRFAECGAHPDDLTCLEDLAKFPFTGKNDLRDNYPYGMFAVPQEEVVRLHASSGTTGKPTVVGYTQNDINTWANVVARSIRAAGGRKGDKVHVSYGYGLFTGGLGAHYGAERLGCTVIPMSGGQTEKQVQLIRDFQPDIIMVTPSYMLNLADEIERQGIDPHDLKLRLGIFGAEPWTDELRRSIEQRLGINALDIYGLSEIMGPGVAMECIETKDGPTIWEDHFYPEIIDPVTGEVLPDGQLGELVFTSLSKEALPMVRYRTRDLTRLLPGTARPMRRIGKITGRSDDMLIIRGVNVFPTQIEEQVLKIKQLSEMYEIHLYRNGNLDSVEVHVELRAECQHLDEGQRKLVIGELSKQIKTYIGISTQVHLQACGTLKRSEGKACHVYDKRLAS.

The protein belongs to the phenylacetyl-CoA ligase family. Monomer.

It catalyses the reaction 2-phenylacetate + ATP + CoA = phenylacetyl-CoA + AMP + diphosphate. It participates in aromatic compound metabolism; phenylacetate degradation. Inhibited by divalent cations (zinc, copper, mercury) and by the sulfhydryl reagents 5,5-dithiobis(2-nitrobenzoic acid), N-ethylmaleimide and p-chloromercuribenzoate. Catalyzes the activation of phenylacetic acid (PA) to phenylacetyl-CoA (PA-CoA). Involved in the phenylalanine metabolism. Can also use CTP and UTP as substrate. The sequence is that of Phenylacetate-coenzyme A ligase (paaK) from Pseudomonas putida (Arthrobacter siderocapsulatus).